We begin with the raw amino-acid sequence, 549 residues long: Probable protein kinase UbiB (549 aa).

The Protein kinase domain occupies 123 to 501; the sequence is DFDDTPLASA…QQKAHKSNYL (379 aa). ATP-binding positions include 129-137 and lysine 152; that span reads LASASISQV. Catalysis depends on aspartate 287, which acts as the Proton acceptor. 2 helical membrane passes run 498–518 and 520–540; these read SNYL…LLNQ and ATLW…VLGW.

This sequence belongs to the ABC1 family. UbiB subfamily.

It is found in the cell inner membrane. It functions in the pathway cofactor biosynthesis; ubiquinone biosynthesis [regulation]. Functionally, is probably a protein kinase regulator of UbiI activity which is involved in aerobic coenzyme Q (ubiquinone) biosynthesis. This Shewanella pealeana (strain ATCC 700345 / ANG-SQ1) protein is Probable protein kinase UbiB.